Reading from the N-terminus, the 72-residue chain is Translation initiation factor IF-1 (72 aa).

Residues 1–72 (MAKEEPIEVE…TRGRIIYRTK (72 aa)) enclose the S1-like domain.

This sequence belongs to the IF-1 family. Component of the 30S ribosomal translation pre-initiation complex which assembles on the 30S ribosome in the order IF-2 and IF-3, IF-1 and N-formylmethionyl-tRNA(fMet); mRNA recruitment can occur at any time during PIC assembly.

The protein localises to the cytoplasm. One of the essential components for the initiation of protein synthesis. Stabilizes the binding of IF-2 and IF-3 on the 30S subunit to which N-formylmethionyl-tRNA(fMet) subsequently binds. Helps modulate mRNA selection, yielding the 30S pre-initiation complex (PIC). Upon addition of the 50S ribosomal subunit IF-1, IF-2 and IF-3 are released leaving the mature 70S translation initiation complex. The protein is Translation initiation factor IF-1 of Syntrophus aciditrophicus (strain SB).